The sequence spans 22 residues: thr operon leader peptide (22 aa).

This sequence belongs to the thr operon leader peptide family.

In terms of biological role, this protein is involved in control of the biosynthesis of threonine. The protein is thr operon leader peptide of Klebsiella pneumoniae (strain 342).